The following is an 808-amino-acid chain: ATP-dependent RNA helicase dbp4 (808 aa).

A disordered region spans residues 1–20 (MAPPSVGRKSKNISKGKVDA). Positions 49 to 77 (KNFSELPLSGPTSSGLEASHFKTLTDVQS) match the Q motif motif. The 175-residue stretch at 80–254 (VPLALKGKDI…RLSLKEPEYV (175 aa)) folds into the Helicase ATP-binding domain. 93 to 100 (AKTGSGKT) is an ATP binding site. The DEAD box signature appears at 202 to 205 (DEAD). Residues 280-439 (KLNTLFGFIR…DIKNQLQNMC (160 aa)) form the Helicase C-terminal domain. Disordered regions lie at residues 491 to 535 (IKFQ…KYDR), 555 to 620 (DDTP…GISK), and 654 to 795 (EEGN…EPET). Over residues 519–535 (TEKKPKKKDEVRTKYDR) the composition is skewed to basic and acidic residues. Composition is skewed to acidic residues over residues 564–573 (GTADADEDND) and 584–605 (DNDD…DDDV). The segment covering 670–705 (FRAKGTAEEQRAKFLEEEAERVREADLLDKQTAKDK) has biased composition (basic and acidic residues). A compositionally biased stretch (acidic residues) spans 720–739 (LDDDDEEALELVDAGDDEDP). The span at 767–778 (KWFEDDSDDERK) shows a compositional bias: basic and acidic residues.

It belongs to the DEAD box helicase family. DDX10/DBP4 subfamily. As to quaternary structure, interacts with the U3 and U14 snoRNAs. Associates with pre-ribosomal complexes.

It is found in the nucleus. It localises to the nucleolus. The catalysed reaction is ATP + H2O = ADP + phosphate + H(+). Functionally, ATP-dependent RNA helicase required for ribosome biogenesis. Involved in the release of U14 snoRNA in pre-ribosomal complexes. Required for pre-rRNA cleavage at site A2. In Sclerotinia sclerotiorum (strain ATCC 18683 / 1980 / Ss-1) (White mold), this protein is ATP-dependent RNA helicase dbp4 (dbp4).